The sequence spans 123 residues: Small ribosomal subunit protein uS12 (123 aa).

D89 bears the 3-methylthioaspartic acid mark.

Belongs to the universal ribosomal protein uS12 family. Part of the 30S ribosomal subunit. Contacts proteins S8 and S17. May interact with IF1 in the 30S initiation complex.

In terms of biological role, with S4 and S5 plays an important role in translational accuracy. Interacts with and stabilizes bases of the 16S rRNA that are involved in tRNA selection in the A site and with the mRNA backbone. Located at the interface of the 30S and 50S subunits, it traverses the body of the 30S subunit contacting proteins on the other side and probably holding the rRNA structure together. The combined cluster of proteins S8, S12 and S17 appears to hold together the shoulder and platform of the 30S subunit. This Sinorhizobium medicae (strain WSM419) (Ensifer medicae) protein is Small ribosomal subunit protein uS12.